A 238-amino-acid polypeptide reads, in one-letter code: Protein lifeguard 4 (238 aa).

Over Met-1–Val-38 the chain is Cytoplasmic. A helical transmembrane segment spans residues Tyr-39 to Phe-59. The Lumenal segment spans residues Gln-60–Glu-68. A helical transmembrane segment spans residues Ser-69–Leu-89. Residues His-90–Asn-97 lie on the Cytoplasmic side of the membrane. The chain crosses the membrane as a helical span at residues Leu-98–Phe-118. At Tyr-119–Asp-120 the chain is on the lumenal side. The helical transmembrane segment at Val-121–Tyr-141 threads the bilayer. The Cytoplasmic portion of the chain corresponds to Thr-142–Lys-151. The chain crosses the membrane as a helical span at residues Phe-152 to Phe-172. Over Phe-173–Ser-175 the chain is Lumenal. The helical transmembrane segment at Glu-176 to Tyr-196 threads the bilayer. Topologically, residues Asp-197–Glu-208 are cytoplasmic. The helical intramembrane region spans Glu-209–Leu-229. Topologically, residues Lys-230–Lys-238 are cytoplasmic.

It belongs to the BI1 family. LFG subfamily. In terms of assembly, interacts with ITPR3.

The protein localises to the golgi apparatus membrane. Functionally, anti-apoptotic protein which can inhibit apoptosis induced by intrinsic and extrinsic apoptotic stimuli. Can modulate both capacitative Ca2+ entry and inositol 1,4,5-trisphosphate (IP3)-mediated Ca2+ release. The protein is Protein lifeguard 4 (Tmbim4) of Mus musculus (Mouse).